The following is a 143-amino-acid chain: Adrenodoxin, mitochondrial (143 aa).

The N-terminal 19 residues, 1–19 (CSAVAVRTLRPLSLSARAA), are a transit peptide targeting the mitochondrion. The 2Fe-2S ferredoxin-type domain occupies 26–130 (ITVHFINRDG…NMTVRVPEAV (105 aa)). [2Fe-2S] cluster contacts are provided by Cys65, Cys71, Cys74, and Cys111.

The protein belongs to the adrenodoxin/putidaredoxin family. It depends on [2Fe-2S] cluster as a cofactor.

The protein localises to the mitochondrion matrix. In terms of biological role, essential for the synthesis of various steroid hormones. Participates in the reduction of mitochondrial cytochrome P450 for steroidogenesis. Transfers electrons from adrenodoxin reductase to CYP11A1, a cytochrome P450 that catalyzes cholesterol side-chain cleavage. Does not form a ternary complex with adrenodoxin reductase and CYP11A1 but shuttles between the two enzymes to transfer electrons. The polypeptide is Adrenodoxin, mitochondrial (FDX1) (Gallus gallus (Chicken)).